A 500-amino-acid chain; its full sequence is MVILSLVSCSFSVFSPPISLRLHLPPVTSLCSHGTFPASSTFRSQLQPLLISCLNHREPALTFRCSCLSSPIESGSQIESLFSLFRDIGFIEEETEMILAKNPDIKSTSLDKIGARVASLQSLKINGFPLQGLIAKCPNLLTSEEFDLVISFLVDELEGRLDPELVERLLSVVDTSILLSFNQKVRLLLLHGIPKEKISHVLNKVYLNKLLYQKSVEDIERLISFLEPFGGIGIIARRPVILNSDLDSQLIPRVDFIRNLSGEDDFATGTVLRRLPAILSYSVEHMNGQVEFLKSFAGLTSEQVFKIVHVFPNVISTSKERKLRPRIEFLKECGFDSPGMFKFLSKAPLILALSENNLSHKLGFLVKIGYKHRTKELAFAMGAVTRTSSDNMQRVIGLYLSYGLSFEDILAMSTKHPQVLQYNYTSLEEKLEYLIEYMGREVEELLAFPAFLGYKLDSRIKHRYEEKLKSRGENMSLNKLLTVSAERFSKAADNIEMICL.

The transit peptide at 1-64 (MVILSLVSCS…NHREPALTFR (64 aa)) directs the protein to the chloroplast.

The protein belongs to the mTERF family.

It is found in the plastid. It localises to the chloroplast. Transcription termination factor that is transcriptionally active in chloroplasts. In Arabidopsis thaliana (Mouse-ear cress), this protein is Transcription termination factor MTERF8, chloroplastic.